The sequence spans 237 residues: Ribosomal RNA small subunit methyltransferase G (237 aa).

S-adenosyl-L-methionine is bound by residues G76, F81, 128–129 (VE), and R147.

It belongs to the methyltransferase superfamily. RNA methyltransferase RsmG family.

The protein localises to the cytoplasm. Functionally, specifically methylates the N7 position of a guanine in 16S rRNA. The chain is Ribosomal RNA small subunit methyltransferase G from Prochlorococcus marinus (strain MIT 9215).